Here is a 476-residue protein sequence, read N- to C-terminus: MAAAVGLRGLAVAGGGESTDSEDDGWEIGYLDRASQKLTGLLPTEEKNETFKKALTTGDISLVEELLDSGISIDSSFRYGWTPLMYAASVANVELVRVLLDRGANASFDKDKQTILITACSARGSEEQILKCVELLLSRNADPNVACRRLMTPVMYAARAGHPQVVAVLVAYGAEVNTQDENGYTALTWAARQGHKNVILKLLELGADKMLQTKDGKTPSEIAKRNKHLEIFNFLSLSLNPLEGKLQQLTKEETICKLLTTVSDKEKDHIFSSYAAFEDLEIFLHGLGLEHMTDLLKERDITLRHLLTMRKDEFTKNGITSRDQQKILAALKELEVEEIKFGELPEVAKLEISGDEFLNFLLKLNKQCGHLITAVQNIITELPVNSHKIVLEWASPQNFTSVCEELVSNVEDLSEEVCKLKDLIQKLQNERENDPTHIPSMDEVSSWNNRILKRTAFTVCGFGFLLFICKLTFQRK.

A phosphoserine mark is found at S18 and S21. ANK repeat units follow at residues 46 to 75 (EKNETFKKALTTGDISLVEELLDSGISIDS), 79 to 108 (YGWTPLMYAASVANVELVRVLLDRGANASF), 111 to 145 (DKQTILITACSARGSEEQILKCVELLLSRNADPNV), 149 to 178 (RLMTPVMYAARAGHPQVVAVLVAYGAEVNT), 182 to 211 (NGYTALTWAARQGHKNVILKLLELGADKML), and 215 to 244 (DGKTPSEIAKRNKHLEIFNFLSLSLNPLEG). An SAM domain is found at 273 to 335 (SYAAFEDLEI…KILAALKELE (63 aa)).

As to quaternary structure, interacts with DDX4, PIWIL1, RANBP9 and TDRD1.

It is found in the cytoplasm. In terms of biological role, plays a central role during spermatogenesis by repressing transposable elements and preventing their mobilization, which is essential for the germline integrity. Acts via the piRNA metabolic process, which mediates the repression of transposable elements during meiosis by forming complexes composed of piRNAs and Piwi proteins and governs the methylation and subsequent repression of transposons. Its association with pi-bodies suggests a participation in the primary piRNAs metabolic process. Required prior to the pachytene stage to facilitate the production of multiple types of piRNAs, including those associated with repeats involved in the regulation of retrotransposons. May act by mediating protein-protein interactions during germ cell maturation. This is Ankyrin repeat, SAM and basic leucine zipper domain-containing protein 1 (ASZ1) from Dasypus novemcinctus (Nine-banded armadillo).